A 694-amino-acid polypeptide reads, in one-letter code: Maintenance of telomere capping protein 4 (694 aa).

The span at 1–12 shows a compositional bias: basic and acidic residues; that stretch reads MTHTNEHDHKAE. The segment at 1 to 26 is disordered; that stretch reads MTHTNEHDHKAEQQQNGRGDTTTETV. Polar residues predominate over residues 13–26; sequence QQQNGRGDTTTETV. Phosphoserine is present on serine 85. The segment covering 211 to 222 has biased composition (low complexity); the sequence is YSPSNESSGSSS. 3 disordered regions span residues 211 to 287, 325 to 437, and 465 to 511; these read YSPS…PEAQ, AKGS…TETY, and KTSN…PVGL. Positions 223 to 243 are enriched in basic residues; it reads SRRHHGHHIHPRRHLQHHSRV. Positions 244–257 are enriched in polar residues; it reads RTANSVHSNTQSLT. Threonine 263 is modified (phosphothreonine). Over residues 276–287 the composition is skewed to polar residues; it reads MITKIATTPEAQ. A compositionally biased stretch (low complexity) spans 403 to 417; the sequence is SNGGTSRRSSNNGES. Residues 418–437 are compositionally biased toward polar residues; that stretch reads ISTNSSKSSMGITFGNTETY. Basic and acidic residues predominate over residues 471–485; the sequence is LRAEGEQALESDKEL. Phosphoserine is present on residues serine 481 and serine 491. A Phosphotyrosine modification is found at tyrosine 493. Residues 655–675 traverse the membrane as a helical segment; sequence RLLEFGIVLVLWTIWFLFSVL.

The protein localises to the membrane. It is found in the cytoplasm. The protein is Maintenance of telomere capping protein 4 (MTC4) of Saccharomyces cerevisiae (strain ATCC 204508 / S288c) (Baker's yeast).